A 646-amino-acid polypeptide reads, in one-letter code: UvrABC system protein B (646 aa).

One can recognise a Helicase ATP-binding domain in the interval 29 to 411 (LEKNPEKSKQ…SNQVVEQIIR (383 aa)). Residue 42 to 49 (GVTGSGKT) participates in ATP binding. The Beta-hairpin motif lies at 95–118 (YYDYYQPESYIPQKDQYIEKDAQI). The Helicase C-terminal domain maps to 428-590 (QVEDIIKETE…ITPQTIVKPI (163 aa)). A UVR domain is found at 609-644 (PNVIVELEAEMYEAAEALEFEKAIKIRDTIAKLKKK).

This sequence belongs to the UvrB family. In terms of assembly, forms a heterotetramer with UvrA during the search for lesions. Interacts with UvrC in an incision complex.

It localises to the cytoplasm. In terms of biological role, the UvrABC repair system catalyzes the recognition and processing of DNA lesions. A damage recognition complex composed of 2 UvrA and 2 UvrB subunits scans DNA for abnormalities. Upon binding of the UvrA(2)B(2) complex to a putative damaged site, the DNA wraps around one UvrB monomer. DNA wrap is dependent on ATP binding by UvrB and probably causes local melting of the DNA helix, facilitating insertion of UvrB beta-hairpin between the DNA strands. Then UvrB probes one DNA strand for the presence of a lesion. If a lesion is found the UvrA subunits dissociate and the UvrB-DNA preincision complex is formed. This complex is subsequently bound by UvrC and the second UvrB is released. If no lesion is found, the DNA wraps around the other UvrB subunit that will check the other stand for damage. This chain is UvrABC system protein B, found in Methanococcus maripaludis (strain DSM 14266 / JCM 13030 / NBRC 101832 / S2 / LL).